Consider the following 215-residue polypeptide: MKAYQREFIEFALNKQVLKFGEFTLKSGRISPYFFNAGLFNTGLDLAKLGRFYAAALMDCGVEFDLLFGPAYKGIPIATTTAVALAEHHERDVPYCFNRKEAKTHGEGGNLVGSPLQGRVMLVDDVITAGTAIRESMEIINAQGATLAGVMISLDRQERGRGEISAIQEVERDYHCKVIAIVTLNDVIRYLEDKPEMAEHLVAVRQYREQYGVTL.

K26 contacts 5-phospho-alpha-D-ribose 1-diphosphate. An orotate-binding site is contributed by 34 to 35 (FF). Residues 72–73 (YK), R99, K100, K103, H105, and 124–132 (DDVITAGTA) contribute to the 5-phospho-alpha-D-ribose 1-diphosphate site. T128 and R156 together coordinate orotate.

It belongs to the purine/pyrimidine phosphoribosyltransferase family. PyrE subfamily. Homodimer. Mg(2+) is required as a cofactor.

It catalyses the reaction orotidine 5'-phosphate + diphosphate = orotate + 5-phospho-alpha-D-ribose 1-diphosphate. It participates in pyrimidine metabolism; UMP biosynthesis via de novo pathway; UMP from orotate: step 1/2. In terms of biological role, catalyzes the transfer of a ribosyl phosphate group from 5-phosphoribose 1-diphosphate to orotate, leading to the formation of orotidine monophosphate (OMP). The polypeptide is Orotate phosphoribosyltransferase (Yersinia pseudotuberculosis serotype O:1b (strain IP 31758)).